Consider the following 122-residue polypeptide: Fluoride-specific ion channel FluC 2 (122 aa).

A run of 4 helical transmembrane segments spans residues 1–21, 33–53, 62–82, and 102–122; these read MAWLYVGCGGIAGTLARFLLS, PLGTLFVNLSGAFLLGLLLAL, VTLALGTGFVGAYTTFSTFTY, and GSILGGLLLAWLGWLAAGSLF. Positions 72 and 75 each coordinate Na(+).

It belongs to the fluoride channel Fluc/FEX (TC 1.A.43) family.

The protein localises to the cell membrane. It catalyses the reaction fluoride(in) = fluoride(out). With respect to regulation, na(+) is not transported, but it plays an essential structural role and its presence is essential for fluoride channel function. Fluoride-specific ion channel. Important for reducing fluoride concentration in the cell, thus reducing its toxicity. The chain is Fluoride-specific ion channel FluC 2 from Moorella thermoacetica (strain ATCC 39073 / JCM 9320).